A 195-amino-acid polypeptide reads, in one-letter code: Small ribosomal subunit protein eS1 (195 aa).

The protein belongs to the eukaryotic ribosomal protein eS1 family.

The polypeptide is Small ribosomal subunit protein eS1 (Methanothermobacter thermautotrophicus (strain ATCC 29096 / DSM 1053 / JCM 10044 / NBRC 100330 / Delta H) (Methanobacterium thermoautotrophicum)).